The chain runs to 42 residues: Perlinhibin-related protein (42 aa).

In terms of processing, contains four disulfide bonds.

In terms of biological role, inhibitor of shell growth. The chain is Perlinhibin-related protein from Haliotis laevigata (Smooth Australian abalone).